Consider the following 115-residue polypeptide: T cell receptor beta variable 16 (115 aa).

The signal sequence occupies residues 1–20; it reads MSPIFTCITILCLLAAGSPG. The Ig-like domain maps to 21–115; the sequence is EEVAQTPKHL…SAVYFCASSQ (95 aa). A disulfide bond links Cys-42 and Cys-111.

Alpha-beta TR is a heterodimer composed of an alpha and beta chain; disulfide-linked. The alpha-beta TR is associated with the transmembrane signaling CD3 coreceptor proteins to form the TR-CD3 (TcR or TCR). The assembly of alpha-beta TR heterodimers with CD3 occurs in the endoplasmic reticulum where a single alpha-beta TR heterodimer associates with one CD3D-CD3E heterodimer, one CD3G-CD3E heterodimer and one CD247 homodimer forming a stable octameric structure. CD3D-CD3E and CD3G-CD3E heterodimers preferentially associate with TR alpha and TR beta chains, respectively. The association of the CD247 homodimer is the last step of TcR assembly in the endoplasmic reticulum and is required for transport to the cell surface.

The protein resides in the cell membrane. In terms of biological role, v region of the variable domain of T cell receptor (TR) beta chain that participates in the antigen recognition. Alpha-beta T cell receptors are antigen specific receptors which are essential to the immune response and are present on the cell surface of T lymphocytes. Recognize peptide-major histocompatibility (MH) (pMH) complexes that are displayed by antigen presenting cells (APC), a prerequisite for efficient T cell adaptive immunity against pathogens. Binding of alpha-beta TR to pMH complex initiates TR-CD3 clustering on the cell surface and intracellular activation of LCK that phosphorylates the ITAM motifs of CD3G, CD3D, CD3E and CD247 enabling the recruitment of ZAP70. In turn ZAP70 phosphorylates LAT, which recruits numerous signaling molecules to form the LAT signalosome. The LAT signalosome propagates signal branching to three major signaling pathways, the calcium, the mitogen-activated protein kinase (MAPK) kinase and the nuclear factor NF-kappa-B (NF-kB) pathways, leading to the mobilization of transcription factors that are critical for gene expression and essential for T cell growth and differentiation. The T cell repertoire is generated in the thymus, by V-(D)-J rearrangement. This repertoire is then shaped by intrathymic selection events to generate a peripheral T cell pool of self-MH restricted, non-autoaggressive T cells. Post-thymic interaction of alpha-beta TR with the pMH complexes shapes TR structural and functional avidity. In Homo sapiens (Human), this protein is T cell receptor beta variable 16.